The sequence spans 517 residues: Probable protein phosphatase 2C 20 (517 aa).

Residues 1-59 (MWVMQGERRRARAPWGPPDTGGALLERWISRERRSDSRDASGSAKQRSAMGNSLPVESK) are disordered. Basic and acidic residues predominate over residues 28–39 (WISRERRSDSRD). The 304-residue stretch at 70 to 373 (KYVVSSMQGW…DNTTVILVLF (304 aa)) folds into the PPM-type phosphatase domain. Residues aspartate 105, glycine 106, glutamate 323, and aspartate 364 each coordinate Mn(2+). The segment at 380–517 (AVPPVDTDTD…PPHDDTYHRW (138 aa)) is disordered. A compositionally biased stretch (polar residues) spans 402–414 (GSNNATASDNNDP). Positions 438–455 (DATATAVGSSSTTAVAAD) are enriched in low complexity. Over residues 499–517 (LPRSNPDKSPPHDDTYHRW) the composition is skewed to basic and acidic residues.

Belongs to the PP2C family. Requires Mg(2+) as cofactor. Mn(2+) is required as a cofactor.

The enzyme catalyses O-phospho-L-seryl-[protein] + H2O = L-seryl-[protein] + phosphate. It carries out the reaction O-phospho-L-threonyl-[protein] + H2O = L-threonyl-[protein] + phosphate. The sequence is that of Probable protein phosphatase 2C 20 from Oryza sativa subsp. japonica (Rice).